A 320-amino-acid polypeptide reads, in one-letter code: MGLCKCPKRKVTNLFCFEHRVNVCEHCLVANHAKCIVQSYLQWLQDSDYNPNCRLCNTLLSSKETARLVCYDLFHWSCLNDLATQQPPNTAPAGYRCPSCQGPVFPPNNLVSPVAATLREKLSTVNWARAGLGLPLIEVAEPVDDTMSHDETDYRDWSVVNSSSDNLSETPETTSQTGYTYNSVAPGAVQQSLNGNMSQDHAVTIRDTGSESVPFNAASSPRKVYDTRENARGQDAVIDFDDDKYRRRPTLNWLARILRNRSGSKSRPASSMQRFLVILIIGVLGFLTLILLMSKLGRASADNDPNLDPLLNPHIHVGKE.

Residues 1–43 form a B box-type; degenerate zinc finger; the sequence is MGLCKCPKRKVTNLFCFEHRVNVCEHCLVANHAKCIVQSYLQW. The Cytoplasmic segment spans residues 1-274; sequence MGLCKCPKRK…KSRPASSMQR (274 aa). The segment at 53 to 101 adopts an RING-type; degenerate zinc-finger fold; sequence CRLCNTLLSSKETARLVCYDLFHWSCLNDLATQQPPNTAPAGYRCPSCQ. The helical transmembrane segment at 275–295 threads the bilayer; that stretch reads FLVILIIGVLGFLTLILLMSK. Over 296-320 the chain is Lumenal; it reads LGRASADNDPNLDPLLNPHIHVGKE.

It belongs to the ZFPL1 family.

The protein localises to the golgi apparatus. Its subcellular location is the cis-Golgi network membrane. Its function is as follows. Required for cis-Golgi integrity and efficient ER to Golgi transport. The polypeptide is Zinc finger protein-like 1 (zfpl1) (Xenopus laevis (African clawed frog)).